The primary structure comprises 289 residues: MVVVNGREPDSRHSDGAMSSSEAEDDFLEPATPTATQAGHGLPLLPQEFPEVVPLNIGGAHFTTRLSTLRRYEDTMLAAMFSGRHYIPTDSEGRYFIDRDGTHFGDVLNFLRSGDLPPREHVRAVHKEAQYYAIGPLLEQLENMQPLKGEKVRQAFLGLMPYYKDHLERIVEIARLRAVQRKARFAKLKVCVFKEEMPITPYECPLLNSLRFERSESDGQLFEHHCEVDVSFGPWEAVADVYDLLHCLVTDLSAQGLTVDHQCIGVCDKHLVNHYYCKRPIYEFKITWW.

The tract at residues 1–42 (MVVVNGREPDSRHSDGAMSSSEAEDDFLEPATPTATQAGHGL) is disordered. The region spanning 53-141 (VPLNIGGAHF…YAIGPLLEQL (89 aa)) is the BTB domain.

Interacts with CUL3.

It is found in the cell membrane. The protein localises to the cytoplasm. The protein resides in the cytosol. Its function is as follows. May be involved in the control of excitability of cortical neurons. In Rattus norvegicus (Rat), this protein is BTB/POZ domain-containing protein KCTD7 (Kctd7).